Here is a 659-residue protein sequence, read N- to C-terminus: MALVTVSRSPPGSGASTPVGPWDQAVQRRSRLQRRQSFAVLRGAVLGLQDGGDNDDAAEASSEPTEKAPSEEELHGDQTDFGQGSQSPQKQEEQRQHLHLMVQLLRPQDDIRLAAQLEAPRPPRLRYLLVVSTREGEGLSQDETVLLGVDFPDSSSPSCTLGLVLPLWSDTQVYLDGDGGFSVTSGGQSRIFKPISIQTMWATLQVLHQACEAALGSGLVPGGSALTWASHYQERLNSEQSCLNEWTAMADLESLRPPSAEPGGSSEQEQMEQAIRAELWKVLDVSDLESVTSKEIRQALELRLGLPLQQYRDFIDNQMLLLVAQRDRASRIFPHLYLGSEWNAANLEELQRNRVTHILNMAREIDNFYPERFTYHNVRLWDEESAQLLPHWKETHRFIEAARAQGTHVLVHCKMGVSRSAATVLAYAMKQYECSLEQALRHVQELRPIARPNPGFLRQLQIYQGILTASRQSHVWEQKVGGVSPEEHPAPEVSTPFPPLPPEPEGGGEEKVVGMEESQAAPKEEPGPRPRINLRGVMRSISLLEPSLELESTSETSDMPEVFSSHESSHEEPLQPFPQLARTKGGQQVDRGPQPALKSRQSVVTLQGSAVVANRTQAFQEQEQGQGQGQGEPCISSTPRFRKVVRQASVHDSGEEGEA.

Polar residues predominate over residues 1 to 16 (MALVTVSRSPPGSGAS). The tract at residues 1–31 (MALVTVSRSPPGSGASTPVGPWDQAVQRRSR) is disordered. An N-acetylalanine modification is found at alanine 2. Phosphoserine occurs at positions 9 and 37. The disordered stretch occupies residues 46-96 (LGLQDGGDNDDAAEASSEPTEKAPSEEELHGDQTDFGQGSQSPQKQEEQRQ). Positions 64–78 (PTEKAPSEEELHGDQ) are enriched in basic and acidic residues. Positions 80–89 (DFGQGSQSPQ) are enriched in polar residues. Phosphoserine is present on residues serine 85 and serine 87. The region spanning 269–324 (EQMEQAIRAELWKVLDVSDLESVTSKEIRQALELRLGLPLQQYRDFIDNQMLLLVA) is the DEK-C domain. Positions 328-469 (RASRIFPHLY…LQIYQGILTA (142 aa)) constitute a Tyrosine-protein phosphatase domain. The Phosphocysteine intermediate role is filled by cysteine 413. Disordered stretches follow at residues 482 to 534 (GVSP…RINL), 547 to 603 (SLEL…RQSV), and 617 to 638 (QAFQ…ISST). Positions 547 to 557 (SLELESTSETS) are enriched in low complexity.

The protein belongs to the protein-tyrosine phosphatase family. In terms of assembly, does not bind to, or colocalize with, filamentous actin.

Its subcellular location is the cytoplasm. The protein resides in the cytoskeleton. It localises to the nucleus. The enzyme catalyses O-phospho-L-tyrosyl-[protein] + H2O = L-tyrosyl-[protein] + phosphate. It carries out the reaction O-phospho-L-seryl-[protein] + H2O = L-seryl-[protein] + phosphate. The catalysed reaction is O-phospho-L-threonyl-[protein] + H2O = L-threonyl-[protein] + phosphate. In terms of biological role, protein phosphatase which may play a role in the regulation of actin filament dynamics. Can dephosphorylate and activate the actin binding/depolymerizing factor cofilin, which subsequently binds to actin filaments and stimulates their disassembly. This is Protein phosphatase Slingshot homolog 3 (SSH3) from Homo sapiens (Human).